We begin with the raw amino-acid sequence, 1217 residues long: ATP-dependent helicase/nuclease subunit A (1217 aa).

The region spanning 10–475 is the UvrD-like helicase ATP-binding domain; that stretch reads VIWTDAQWQS…IDLSQNFRSR (466 aa). 31-38 is an ATP binding site; sequence AAAGSGKT. Positions 476 to 786 constitute a UvrD-like helicase C-terminal domain; it reads KEVLSTTNYI…RMMTIHSSKG (311 aa).

This sequence belongs to the helicase family. AddA subfamily. In terms of assembly, heterodimer of AddA and AddB/RexB. Mg(2+) serves as cofactor.

It catalyses the reaction Couples ATP hydrolysis with the unwinding of duplex DNA by translocating in the 3'-5' direction.. It carries out the reaction ATP + H2O = ADP + phosphate + H(+). In terms of biological role, the heterodimer acts as both an ATP-dependent DNA helicase and an ATP-dependent, dual-direction single-stranded exonuclease. Recognizes the chi site generating a DNA molecule suitable for the initiation of homologous recombination. The AddA nuclease domain is required for chi fragment generation; this subunit has the helicase and 3' -&gt; 5' nuclease activities. The chain is ATP-dependent helicase/nuclease subunit A from Staphylococcus aureus (strain MW2).